The primary structure comprises 350 residues: 3-dehydroquinate synthase (350 aa).

Residues 106–110, 130–131, Lys143, and Lys152 each bind NAD(+); these read GVIGD and TS. Residues Glu185, His246, and His263 each contribute to the Zn(2+) site.

This sequence belongs to the sugar phosphate cyclases superfamily. Dehydroquinate synthase family. It depends on Co(2+) as a cofactor. Zn(2+) is required as a cofactor. NAD(+) serves as cofactor.

Its subcellular location is the cytoplasm. The catalysed reaction is 7-phospho-2-dehydro-3-deoxy-D-arabino-heptonate = 3-dehydroquinate + phosphate. Its pathway is metabolic intermediate biosynthesis; chorismate biosynthesis; chorismate from D-erythrose 4-phosphate and phosphoenolpyruvate: step 2/7. Catalyzes the conversion of 3-deoxy-D-arabino-heptulosonate 7-phosphate (DAHP) to dehydroquinate (DHQ). In Clostridium botulinum (strain Alaska E43 / Type E3), this protein is 3-dehydroquinate synthase.